Here is a 101-residue protein sequence, read N- to C-terminus: Small ribosomal subunit protein bS16 (101 aa).

The protein belongs to the bacterial ribosomal protein bS16 family.

In Ureaplasma urealyticum serovar 10 (strain ATCC 33699 / Western), this protein is Small ribosomal subunit protein bS16.